Consider the following 227-residue polypeptide: Glutathione S-transferase U17 (227 aa).

Residues 4–83 form the GST N-terminal domain; the sequence is SDVKLIGAWA…YIDDTWSSSG (80 aa). Residues 14–15, 40–41, 54–55, and 67–68 contribute to the glutathione site; these read SP, SK, KI, and ES. A GST C-terminal domain is found at 90-222; the sequence is DPYDRAMARF…KLAEFAKKIF (133 aa).

Belongs to the GST superfamily. Tau family.

Its subcellular location is the cytoplasm. The protein resides in the cytosol. The enzyme catalyses RX + glutathione = an S-substituted glutathione + a halide anion + H(+). Involved in light signaling, mainly phyA-mediated photomorphogenesis and in the integration of various phytohormone signals to modulate various aspects of plant development by affecting glutathione pools. In vitro, possesses glutathione S-transferase activity toward 1-chloro-2,4-dinitrobenzene (CDNB) and benzyl isothiocyanate (BITC). The protein is Glutathione S-transferase U17 (GSTU17) of Arabidopsis thaliana (Mouse-ear cress).